The chain runs to 258 residues: Putative [LysW]-aminoadipate/[LysW]-glutamate kinase (258 aa).

Residues Gly33–Gly34, Arg60, and Asn164 each bind substrate.

Belongs to the acetylglutamate kinase family. LysZ subfamily.

It localises to the cytoplasm. It catalyses the reaction [amino-group carrier protein]-C-terminal-N-(1,4-dicarboxybutan-1-yl)-L-glutamine + ATP = [amino-group carrier protein]-C-terminal-N-(1-carboxy-5-phosphooxy-5-oxopentan-1-yl)-L-glutamine + ADP. The catalysed reaction is [amino-group carrier protein]-C-terminal-gamma-(L-glutamyl)-L-glutamate + ATP = [amino-group carrier protein]-C-terminal-gamma-(5-phospho-L-glutamyl)-L-glutamate + ADP. It participates in amino-acid biosynthesis; L-lysine biosynthesis via AAA pathway; L-lysine from L-alpha-aminoadipate (Thermus route): step 2/5. It functions in the pathway amino-acid biosynthesis; L-arginine biosynthesis. Functionally, involved in both the arginine and lysine biosynthetic pathways. Phosphorylates the LysW-bound precursors glutamate (for arginine biosynthesis), respectively alpha-aminoadipate (for lysine biosynthesis). The protein is Putative [LysW]-aminoadipate/[LysW]-glutamate kinase of Caldivirga maquilingensis (strain ATCC 700844 / DSM 13496 / JCM 10307 / IC-167).